A 101-amino-acid chain; its full sequence is Small ribosomal subunit protein bS6 (101 aa).

Belongs to the bacterial ribosomal protein bS6 family.

Functionally, binds together with bS18 to 16S ribosomal RNA. The polypeptide is Small ribosomal subunit protein bS6 (Arthrobacter sp. (strain FB24)).